A 486-amino-acid polypeptide reads, in one-letter code: UDP-N-acetylmuramate--L-alanine ligase (486 aa).

132–138 (GTHGKTT) contacts ATP.

The protein belongs to the MurCDEF family.

Its subcellular location is the cytoplasm. The enzyme catalyses UDP-N-acetyl-alpha-D-muramate + L-alanine + ATP = UDP-N-acetyl-alpha-D-muramoyl-L-alanine + ADP + phosphate + H(+). It participates in cell wall biogenesis; peptidoglycan biosynthesis. Functionally, cell wall formation. The polypeptide is UDP-N-acetylmuramate--L-alanine ligase (Halorhodospira halophila (strain DSM 244 / SL1) (Ectothiorhodospira halophila (strain DSM 244 / SL1))).